Consider the following 79-residue polypeptide: Delta-hormotoxin-Cpt1a (79 aa).

A signal peptide spans 1 to 20; that stretch reads MKTQVLAVFVLCVLFCLAES. A propeptide spanning residues 21-31 is cleaved from the precursor; the sequence is RTTLNKRIDIA. 3 cysteine pairs are disulfide-bonded: Cys36/Cys75, Cys38/Cys66, and Cys56/Cys76.

The protein belongs to the sea anemone sodium channel inhibitory toxin family.

The protein resides in the secreted. It localises to the nematocyst. In neuromuscular preparation of crustaceans, the toxin increased neurotransmitter release, causing repetitive firing of the axons. May affect sodium channels (Nav). The sequence is that of Delta-hormotoxin-Cpt1a from Calliactis parasitica (Sea anemone).